A 533-amino-acid chain; its full sequence is D-3-phosphoglycerate dehydrogenase (533 aa).

Ala2 is subject to N-acetylalanine. Ser14 carries the post-translational modification Phosphoserine. The residue at position 58 (Lys58) is an N6-acetyllysine. Residues Thr78, 155-156 (RI), Asp175, Thr207, 234-236 (CAR), and Asp260 contribute to the NAD(+) site. Position 78 is a phosphothreonine (Thr78). Arg236 is an active-site residue. Glu265 is an active-site residue. Catalysis depends on His283, which acts as the Proton donor. 283–286 (HLGA) lines the NAD(+) pocket.

This sequence belongs to the D-isomer specific 2-hydroxyacid dehydrogenase family. As to quaternary structure, homotetramer.

The catalysed reaction is (2R)-3-phosphoglycerate + NAD(+) = 3-phosphooxypyruvate + NADH + H(+). It carries out the reaction (R)-2-hydroxyglutarate + NAD(+) = 2-oxoglutarate + NADH + H(+). It catalyses the reaction (S)-malate + NAD(+) = oxaloacetate + NADH + H(+). The protein operates within amino-acid biosynthesis; L-serine biosynthesis; L-serine from 3-phospho-D-glycerate: step 1/3. In terms of biological role, catalyzes the reversible oxidation of 3-phospho-D-glycerate to 3-phosphonooxypyruvate, the first step of the phosphorylated L-serine biosynthesis pathway. Also catalyzes the reversible oxidation of 2-hydroxyglutarate to 2-oxoglutarate and the reversible oxidation of (S)-malate to oxaloacetate. In Sus scrofa (Pig), this protein is D-3-phosphoglycerate dehydrogenase (PHGDH).